The sequence spans 339 residues: GTPase Obg (339 aa).

An Obg domain is found at 1–159 (MKFVDEAFVR…RELKLELKLL (159 aa)). Positions 160–333 (ADVGLLGLPN…LCYDLMSFLE (174 aa)) constitute an OBG-type G domain. GTP is bound by residues 166–173 (GLPNAGKS), 191–195 (FTTLY), 213–216 (DIPG), 283–286 (NKID), and 314–316 (SAI). 2 residues coordinate Mg(2+): Ser-173 and Thr-193.

It belongs to the TRAFAC class OBG-HflX-like GTPase superfamily. OBG GTPase family. As to quaternary structure, monomer. Mg(2+) serves as cofactor.

The protein localises to the cytoplasm. In terms of biological role, an essential GTPase which binds GTP, GDP and possibly (p)ppGpp with moderate affinity, with high nucleotide exchange rates and a fairly low GTP hydrolysis rate. Plays a role in control of the cell cycle, stress response, ribosome biogenesis and in those bacteria that undergo differentiation, in morphogenesis control. The chain is GTPase Obg from Coxiella burnetii (strain RSA 331 / Henzerling II).